Consider the following 468-residue polypeptide: ATP synthase subunit beta (468 aa).

ATP is bound at residue 155 to 162 (GGAGVGKT).

The protein belongs to the ATPase alpha/beta chains family. As to quaternary structure, F-type ATPases have 2 components, CF(1) - the catalytic core - and CF(0) - the membrane proton channel. CF(1) has five subunits: alpha(3), beta(3), gamma(1), delta(1), epsilon(1). CF(0) has three main subunits: a(1), b(2) and c(9-12). The alpha and beta chains form an alternating ring which encloses part of the gamma chain. CF(1) is attached to CF(0) by a central stalk formed by the gamma and epsilon chains, while a peripheral stalk is formed by the delta and b chains.

The protein resides in the cell membrane. It catalyses the reaction ATP + H2O + 4 H(+)(in) = ADP + phosphate + 5 H(+)(out). Produces ATP from ADP in the presence of a proton gradient across the membrane. The catalytic sites are hosted primarily by the beta subunits. The sequence is that of ATP synthase subunit beta from Streptococcus pyogenes serotype M3 (strain ATCC BAA-595 / MGAS315).